The following is a 477-amino-acid chain: P3 protein (477 aa).

The disordered stretch occupies residues 1–21; the sequence is MVLMQDKGSSQQWPGLGGEGG. Transmembrane regions (helical) follow at residues 225-245, 253-273, 281-301, 320-340, 361-381, 383-403, 417-437, and 450-470; these read PMLL…FLMA, ALAL…SYLF, VTLA…FLPL, ISKI…GVLI, VLLL…LAGI, LPIV…GYCL, VSIE…QLSL, and FIVA…HFIY.

The protein belongs to the bile acid:sodium symporter (BASS) (TC 2.A.28) family.

Its subcellular location is the membrane. In terms of biological role, the ubiquitous expression and the conservation of the sequence in distant animal species suggest that the gene codes for a protein with housekeeping functions. This Homo sapiens (Human) protein is P3 protein (SLC10A3).